Reading from the N-terminus, the 151-residue chain is MHKIPKGTALAFDFGEARIGVAQGDAELGLSHPLSTVTGGSNDEKFAAIAKLVQEWQPRYFVVGLPVHTDGTKHEMTHLSRKFGRRLNGRFNLPVYWVDERLSSVYAESLLSEAQVFGKKRKSVLDQVAAQAILHGFFEGGPAECFNGREG.

This sequence belongs to the YqgF nuclease family.

It is found in the cytoplasm. Functionally, could be a nuclease involved in processing of the 5'-end of pre-16S rRNA. This Neisseria meningitidis serogroup B (strain ATCC BAA-335 / MC58) protein is Putative pre-16S rRNA nuclease.